Consider the following 148-residue polypeptide: SsrA-binding protein (148 aa).

The protein belongs to the SmpB family.

The protein resides in the cytoplasm. Functionally, required for rescue of stalled ribosomes mediated by trans-translation. Binds to transfer-messenger RNA (tmRNA), required for stable association of tmRNA with ribosomes. tmRNA and SmpB together mimic tRNA shape, replacing the anticodon stem-loop with SmpB. tmRNA is encoded by the ssrA gene; the 2 termini fold to resemble tRNA(Ala) and it encodes a 'tag peptide', a short internal open reading frame. During trans-translation Ala-aminoacylated tmRNA acts like a tRNA, entering the A-site of stalled ribosomes, displacing the stalled mRNA. The ribosome then switches to translate the ORF on the tmRNA; the nascent peptide is terminated with the 'tag peptide' encoded by the tmRNA and targeted for degradation. The ribosome is freed to recommence translation, which seems to be the essential function of trans-translation. The sequence is that of SsrA-binding protein from Mycoplasma mycoides subsp. mycoides SC (strain CCUG 32753 / NCTC 10114 / PG1).